We begin with the raw amino-acid sequence, 213 residues long: Uracil phosphoribosyltransferase (213 aa).

5-phospho-alpha-D-ribose 1-diphosphate contacts are provided by residues arginine 78, arginine 103, and 131–139 (DPMLATGGT). Residues isoleucine 197 and 202–204 (GDA) contribute to the uracil site. Residue aspartate 203 coordinates 5-phospho-alpha-D-ribose 1-diphosphate.

The protein belongs to the UPRTase family. Mg(2+) serves as cofactor.

It carries out the reaction UMP + diphosphate = 5-phospho-alpha-D-ribose 1-diphosphate + uracil. The protein operates within pyrimidine metabolism; UMP biosynthesis via salvage pathway; UMP from uracil: step 1/1. Allosterically activated by GTP. Its function is as follows. Catalyzes the conversion of uracil and 5-phospho-alpha-D-ribose 1-diphosphate (PRPP) to UMP and diphosphate. This Bifidobacterium adolescentis (strain ATCC 15703 / DSM 20083 / NCTC 11814 / E194a) protein is Uracil phosphoribosyltransferase.